Reading from the N-terminus, the 553-residue chain is Protein Early 65 kDa (553 aa).

Its subcellular location is the host cytoplasm. May participate in the recruitment of G-actin to the host nucleus. The polypeptide is Protein Early 65 kDa (HE65) (Autographa californica nuclear polyhedrosis virus (AcMNPV)).